Reading from the N-terminus, the 218-residue chain is Adenylate kinase (218 aa).

10 to 15 is a binding site for ATP; the sequence is GAGKGT. An NMP region spans residues 30–59; it reads STGDMLRAAVKAGSPLGLKVKDIMTSGGLV. AMP is bound by residues Thr-31, Arg-36, 57-59, 85-88, and Gln-92; these read GLV and GFPR. Residues 122-159 are LID; it reads GRRVHEASGRVYHVKHNAPKTEGVDDETGEPLVQRDDD. ATP contacts are provided by residues Arg-123 and 132–133; that span reads VY. Residues Arg-156 and Arg-167 each contribute to the AMP site. Gly-203 serves as a coordination point for ATP.

It belongs to the adenylate kinase family. In terms of assembly, monomer.

It localises to the cytoplasm. The enzyme catalyses AMP + ATP = 2 ADP. The protein operates within purine metabolism; AMP biosynthesis via salvage pathway; AMP from ADP: step 1/1. Functionally, catalyzes the reversible transfer of the terminal phosphate group between ATP and AMP. Plays an important role in cellular energy homeostasis and in adenine nucleotide metabolism. This chain is Adenylate kinase, found in Saccharophagus degradans (strain 2-40 / ATCC 43961 / DSM 17024).